The primary structure comprises 552 residues: Gamma-aminobutyric acid receptor subunit alpha-4 (552 aa).

The signal sequence occupies residues 1–35 (MVSVQKVPAIVLCSGVSLALLHVLCLATCLNESPG). Over 36–259 (QNSKDEKLCP…FHLRRKMGYF (224 aa)) the chain is Extracellular. N-linked (GlcNAc...) asparagine glycosylation occurs at asparagine 47. Arginine 100 contributes to the 4-aminobutanoate binding site. N-linked (GlcNAc...) asparagine glycosylation is found at asparagine 144 and asparagine 157. Position 163 (threonine 163) interacts with 4-aminobutanoate. Cysteine 172 and cysteine 186 are disulfide-bonded. A helical transmembrane segment spans residues 260-280 (MIQTYIPCIMTVILSQVSFWI). The Cytoplasmic segment spans residues 281–284 (NKES). A helical membrane pass occupies residues 285 to 305 (VPARTVFGITTVLTMTTLSIS). The Extracellular segment spans residues 306–318 (ARHSLPKVSYATA). The helical transmembrane segment at 319 to 341 (MDWFIAVCFAFVFSALIEFAAVN) threads the bilayer. Over 342 to 515 (YFTNIQMQKA…PPPSGSGTSK (174 aa)) the chain is Cytoplasmic. Disordered regions lie at residues 353 to 436 (KKIS…NPFS), 448 to 470 (ARGLSSAASPSPHGTLQPAPLRS), and 486 to 513 (TTVNTTGVPGNVSATPPPSAPPPSGSGT). The span at 403–423 (RTEVGNHSSKTTAAQESSETT) shows a compositional bias: polar residues. Composition is skewed to low complexity over residues 448–458 (ARGLSSAASPS) and 486–499 (TTVNTTGVPGNVSA). Over residues 500–509 (TPPPSAPPPS) the composition is skewed to pro residues. A helical transmembrane segment spans residues 516–538 (IDKYARILFPVTFGAFNMVYWVV). Over 539-552 (YLSKDTMEKSESLM) the chain is Extracellular.

The protein belongs to the ligand-gated ion channel (TC 1.A.9) family. Gamma-aminobutyric acid receptor (TC 1.A.9.5) subfamily. GABRA4 sub-subfamily. Heteropentamer, formed by a combination of alpha (GABRA1-6), beta (GABRB1-3), gamma (GABRG1-3), delta (GABRD), epsilon (GABRE), rho (GABRR1-3), pi (GABRP) and theta (GABRQ) chains, each subunit exhibiting distinct physiological and pharmacological properties. In terms of tissue distribution, expressed in the brain.

The protein resides in the cell membrane. The protein localises to the postsynaptic cell membrane. With respect to regulation, potentiated by histamine. Alpha subunit of the heteropentameric ligand-gated chloride channel gated by gamma-aminobutyric acid (GABA), a major inhibitory neurotransmitter in the brain. GABA-gated chloride channels, also named GABA(A) receptors (GABAAR), consist of five subunits arranged around a central pore and contain GABA active binding site(s) located at the alpha and beta subunit interface(s). Alpha-4/GABRA4 subunit often assembles with delta or gamma-2 subunits, in combination with beta subunits. When activated by GABA, GABAARs selectively allow the flow of chloride anions across the cell membrane down their electrochemical gradient. GABAARs containing alpha-4 are predominantly extrasynaptic, contributing to tonic inhibition in dentate granule cells and thalamic relay neurons. Extrasynaptic alpha-4-containing GABAARs control levels of excitability and network activity. GABAAR containing alpha-4-beta-3-delta subunits can simultaneously bind GABA and histamine where histamine binds at the interface of two neighboring beta subunits, which may be involved in the regulation of sleep and wakefulness. The protein is Gamma-aminobutyric acid receptor subunit alpha-4 of Rattus norvegicus (Rat).